The primary structure comprises 315 residues: Secreted mono- and diacylglycerol lipase LIP2 (315 aa).

The N-terminal stretch at 1–21 (MACFRVILYLSVIFFVQCVFA) is a signal peptide. Cysteines 68 and 308 form a disulfide. Residue asparagine 74 is glycosylated (N-linked (GlcNAc...) asparagine). The Nucleophile role is filled by serine 182. Aspartate 240 is a catalytic residue. N-linked (GlcNAc...) asparagine glycosylation is present at asparagine 265. Histidine 292 is a catalytic residue.

It belongs to the AB hydrolase superfamily. Lipase family. Class 3 subfamily.

It is found in the secreted. It catalyses the reaction a monoacylglycerol + H2O = glycerol + a fatty acid + H(+). The enzyme catalyses a diacylglycerol + H2O = a monoacylglycerol + a fatty acid + H(+). Its function is as follows. Secreted lipase involved in Dandruff and seborrheic dermatitis (D/SD) probably via lipase-mediated breakdown of sebaceous lipids and release of irritating free fatty acids. Shows activity against monoglyceride and diglyceride substrates and generates free oleic acid from the substrates mono- and diolein. Able to cleave the oleic acid from both the 1 and the 2 position of the glycerol backbone as 1,2 isomers of diolein were converted into oleic acid and glycerol. Due to an absence of fatty acid synthase genes in Malassezia species, secretory lipases are essential for the yeast to generate free fatty acids from degradation of sebum and assimilate them as lipid sources for growth. Plays an essential role at the pathogen-host interface during disease progression. Also performs the reverse reaction to build diacylglycerols from monoacylglycerols. The protein is Secreted mono- and diacylglycerol lipase LIP2 of Malassezia restricta (Seborrheic dermatitis infection agent).